Consider the following 81-residue polypeptide: Conotoxin ArMKLT2-0311 (81 aa).

An N-terminal signal peptide occupies residues 1 to 22; that stretch reads MKLTCVLIVALLFLTACQLTTA. Positions 23–34 are enriched in basic and acidic residues; that stretch reads DDSRDKQEDPLV. The interval 23-45 is disordered; sequence DDSRDKQEDPLVRSHRKMQKSED. Positions 23 to 51 are excised as a propeptide; it reads DDSRDKQEDPLVRSHRKMQKSEDPKMAER. Intrachain disulfides connect Cys52–Cys67, Cys59–Cys71, and Cys66–Cys80.

Belongs to the conotoxin O1 superfamily. In terms of tissue distribution, expressed by the venom duct.

The protein resides in the secreted. In Conus arenatus (Sand-dusted cone), this protein is Conotoxin ArMKLT2-0311.